The primary structure comprises 597 residues: DNA mismatch repair protein MutL (597 aa).

Belongs to the DNA mismatch repair MutL/HexB family.

This protein is involved in the repair of mismatches in DNA. It is required for dam-dependent methyl-directed DNA mismatch repair. May act as a 'molecular matchmaker', a protein that promotes the formation of a stable complex between two or more DNA-binding proteins in an ATP-dependent manner without itself being part of a final effector complex. The protein is DNA mismatch repair protein MutL of Rhodopseudomonas palustris (strain BisB5).